The chain runs to 395 residues: Protein SGT1 (395 aa).

K32 participates in a covalent cross-link: Glycyl lysine isopeptide (Lys-Gly) (interchain with G-Cter in ubiquitin). Residues 137–175 (KKNKKQKDSTNKHTIKPVESIENRGDNNSSHSPISPLKI) are disordered. 2 positions are modified to phosphoserine: S168 and S171. A CS domain is found at 182-277 (SPKFKIDWYQ…IDSTQWKKLE (96 aa)). One can recognise an SGS domain in the interval 312-395 (SYPSSSKKKI…PPEGMEPKHW (84 aa)). The interval 373 to 395 (DWEDVSKGTVKTSPPEGMEPKHW) is disordered.

This sequence belongs to the SGT1 family. Interacts with SKP1/CBF3D. Part of SCF E3 ubiquitin ligase complexes containing SKP1, CDC53, HRT1 and some F-box proteins. Interacts with CIR1/CDC35.

In terms of biological role, involved in ubiquitination and subsequent proteasomal degradation of target proteins. Required for both entry into S phase and kinetochore function. Also involved in cyclic AMP (cAMP) pathway, possibly by participating in the assembly or the conformational activation of specific multiprotein complexes. The polypeptide is Protein SGT1 (Saccharomyces cerevisiae (strain ATCC 204508 / S288c) (Baker's yeast)).